A 391-amino-acid chain; its full sequence is Chaperone protein DnaJ (391 aa).

Residues 6–70 enclose the J domain; that stretch reads DYYEILEVSR…EKRKLYDTYG (65 aa). Residues 145 to 226 form a CR-type zinc finger; the sequence is GCIKNVKYTR…CKSRRMVDEV (82 aa). Zn(2+) contacts are provided by Cys158, Cys161, Cys174, Cys177, Cys200, Cys203, Cys214, and Cys217. CXXCXGXG motif repeat units lie at residues 158 to 165, 174 to 181, 200 to 207, and 214 to 221; these read CPDCNGSG, CSDCNGEG, CPSCKGEG, and CKKCKSRR.

It belongs to the DnaJ family. In terms of assembly, homodimer. Requires Zn(2+) as cofactor.

Its subcellular location is the cytoplasm. Functionally, participates actively in the response to hyperosmotic and heat shock by preventing the aggregation of stress-denatured proteins and by disaggregating proteins, also in an autonomous, DnaK-independent fashion. Unfolded proteins bind initially to DnaJ; upon interaction with the DnaJ-bound protein, DnaK hydrolyzes its bound ATP, resulting in the formation of a stable complex. GrpE releases ADP from DnaK; ATP binding to DnaK triggers the release of the substrate protein, thus completing the reaction cycle. Several rounds of ATP-dependent interactions between DnaJ, DnaK and GrpE are required for fully efficient folding. Also involved, together with DnaK and GrpE, in the DNA replication of plasmids through activation of initiation proteins. In Mycoplasmoides gallisepticum (strain R(low / passage 15 / clone 2)) (Mycoplasma gallisepticum), this protein is Chaperone protein DnaJ.